The chain runs to 800 residues: N,N'-diacetylchitobiose phosphorylase (800 aa).

Residues arginine 333, arginine 343, arginine 349, aspartate 350, tryptophan 490, and aspartate 492 each coordinate N-acetyl-alpha-D-glucosamine 1-phosphate. The Proton donor role is filled by aspartate 492. N-acetyl-D-glucosamine-binding residues include aspartate 492, lysine 636, and glutamate 637. The N-acetyl-alpha-D-glucosamine 1-phosphate site is built by glutamate 637, histidine 644, glutamine 690, threonine 709, and glycine 710.

The protein belongs to the glycosyl hydrolase 94 family. As to quaternary structure, homodimer.

It carries out the reaction N,N'-diacetylchitobiose + phosphate = N-acetyl-alpha-D-glucosamine 1-phosphate + N-acetyl-D-glucosamine. In terms of biological role, catalyzes the reversible phosphorolysis of chitobiose (N,N'-diacetylchitobiose or (GlcNAc)(2)) into N-acetyl-alpha-D-glucosamine 1-phosphate (GlcNAc-1-P) and N-acetyl-D-glucosamine (GlcNAc) with inversion of the anomeric configuration. The sequence is that of N,N'-diacetylchitobiose phosphorylase from Vibrio furnissii.